An 881-amino-acid chain; its full sequence is MASTGATPMMQQYLSIKEQHRDAILFYRMGDFYEMFFEDAQTAAPVLEIALTSRNKNDTDPIPMCGVPVKAADGYIGRLIENGFKVAVCEQTEDPAAAKGLVRRDVVRIVTPGMIIDNALLEKGTNNYVVCLAHADGVVGFASVDISTGTFRVCESSDLRAVRHELLRIAPREVVIPESGADDAALSPFVSLFPPAIRTTLANREFDYRTACQRLTDQFQTRSLEGFGCRGLKPGIVAAGALLSYVNDTQRQKASHLTGLEVYSIDQYLLMDEVTCRNLELVANLRNNGRQGTLIDVLDACVTAMGSRLLRRWMLYPLLSAEAINRRLDAVAEAKEGLGTRKAVRELLKQVYDIERLTSRAVMGRVTPRDLLALKQTLFALPGLATELKSFDSPFFSFAGEPGPEGLDKLAGLADLLKAAVREDAPVSIADGGVINPDYHPRLAELVTISRDGKSSLARLEATEKEKTGISTLKVRYNKVFGYYIEVPRSQVGAVPAHYVRKQTLVNGERYITDELKVFEEKALGAEEQRVRLEQELFADIVGRVTACSPMLFAVARVAAGIDVLCALAQVADDHDYVRPEMLSGGEIIIEEGRHPVVERMLSGERYVPNSITLNDTDRQLLIITGPNMAGKSTVLRKVALFSVMAQMGSFVPARRAAMGVVDRLFTRVGALDNLASGQSTFMVEMEETANIINNATPKSLVVIDEIGRGTSTYDGLSIAWAVAEALHDLHGRGVKTLFATHYHELTELENTRPRVKNFHIAVKEWNDTIIFLRKLVEGSTNRSYGIQVARLAGIPGPVIARAKKILLDIEQGTYSFEAKSGTAPGTGQSGPVQLSLFTPPEQMLVDRLQKVDISTMTPLEALNCLHELQQKAHAISETDG.

626–633 (GPNMAGKS) serves as a coordination point for ATP.

Belongs to the DNA mismatch repair MutS family.

Functionally, this protein is involved in the repair of mismatches in DNA. It is possible that it carries out the mismatch recognition step. This protein has a weak ATPase activity. The polypeptide is DNA mismatch repair protein MutS (Desulfosudis oleivorans (strain DSM 6200 / JCM 39069 / Hxd3) (Desulfococcus oleovorans)).